Here is a 210-residue protein sequence, read N- to C-terminus: Thiamine-phosphate synthase (210 aa).

Residues 36–40 (QLRIK) and Asn-68 contribute to the 4-amino-2-methyl-5-(diphosphooxymethyl)pyrimidine site. Residues Asp-69 and Asp-88 each contribute to the Mg(2+) site. Residue Ser-107 participates in 4-amino-2-methyl-5-(diphosphooxymethyl)pyrimidine binding. 133–135 (TQT) serves as a coordination point for 2-[(2R,5Z)-2-carboxy-4-methylthiazol-5(2H)-ylidene]ethyl phosphate. Residue Lys-136 coordinates 4-amino-2-methyl-5-(diphosphooxymethyl)pyrimidine. Residues Gly-165 and 185 to 186 (VS) contribute to the 2-[(2R,5Z)-2-carboxy-4-methylthiazol-5(2H)-ylidene]ethyl phosphate site.

Belongs to the thiamine-phosphate synthase family. Mg(2+) is required as a cofactor.

It catalyses the reaction 2-[(2R,5Z)-2-carboxy-4-methylthiazol-5(2H)-ylidene]ethyl phosphate + 4-amino-2-methyl-5-(diphosphooxymethyl)pyrimidine + 2 H(+) = thiamine phosphate + CO2 + diphosphate. The enzyme catalyses 2-(2-carboxy-4-methylthiazol-5-yl)ethyl phosphate + 4-amino-2-methyl-5-(diphosphooxymethyl)pyrimidine + 2 H(+) = thiamine phosphate + CO2 + diphosphate. The catalysed reaction is 4-methyl-5-(2-phosphooxyethyl)-thiazole + 4-amino-2-methyl-5-(diphosphooxymethyl)pyrimidine + H(+) = thiamine phosphate + diphosphate. It functions in the pathway cofactor biosynthesis; thiamine diphosphate biosynthesis; thiamine phosphate from 4-amino-2-methyl-5-diphosphomethylpyrimidine and 4-methyl-5-(2-phosphoethyl)-thiazole: step 1/1. Condenses 4-methyl-5-(beta-hydroxyethyl)thiazole monophosphate (THZ-P) and 2-methyl-4-amino-5-hydroxymethyl pyrimidine pyrophosphate (HMP-PP) to form thiamine monophosphate (TMP). This is Thiamine-phosphate synthase from Cronobacter sakazakii (strain ATCC BAA-894) (Enterobacter sakazakii).